We begin with the raw amino-acid sequence, 543 residues long: Probable E3 ubiquitin-protein ligase ARI9 (543 aa).

Positions 1–26 (MDFSDDDMIDNKSGEENYSYGGGNES) are disordered. Residues 124–332 (VNIQCGICFE…RHSGACNRFV (209 aa)) are TRIAD supradomain. Residues C128, C131, C145, H147, C150, C153, C173, C178, C217, C222, C240, C242, C247, C250, H255, C260, C287, and C290 each contribute to the Zn(2+) site. An RING-type 1 zinc finger spans residues 128 to 178 (CGICFESYTREEIARVSCGHPYCKTCWAGYITTKIEDGPGCLRVKCPEPSC). The IBR-type zinc-finger motif lies at 197–260 (EKYSRYILRS…SEDAHSPVDC (64 aa)). Residues 287–317 (CPECKRPIEKNDGCNHMTCSAPCGHEFCWIC) form an RING-type 2; atypical zinc finger. Residue C300 is part of the active site. Zn(2+) contacts are provided by C305, C309, C314, C317, H324, and C328.

This sequence belongs to the RBR family. Ariadne subfamily. Zn(2+) serves as cofactor.

The catalysed reaction is [E2 ubiquitin-conjugating enzyme]-S-ubiquitinyl-L-cysteine + [acceptor protein]-L-lysine = [E2 ubiquitin-conjugating enzyme]-L-cysteine + [acceptor protein]-N(6)-ubiquitinyl-L-lysine.. It functions in the pathway protein modification; protein ubiquitination. Functionally, might act as an E3 ubiquitin-protein ligase, or as part of E3 complex, which accepts ubiquitin from specific E2 ubiquitin-conjugating enzymes and then transfers it to substrates. The polypeptide is Probable E3 ubiquitin-protein ligase ARI9 (ARI9) (Arabidopsis thaliana (Mouse-ear cress)).